We begin with the raw amino-acid sequence, 120 residues long: Small ribosomal subunit protein bS16 (120 aa).

A disordered region spans residues G81–A120. The span at E95 to K110 shows a compositional bias: basic and acidic residues. Over residues A111 to A120 the composition is skewed to low complexity.

It belongs to the bacterial ribosomal protein bS16 family.

This is Small ribosomal subunit protein bS16 from Methylorubrum populi (strain ATCC BAA-705 / NCIMB 13946 / BJ001) (Methylobacterium populi).